Reading from the N-terminus, the 995-residue chain is Beta-agarase A (995 aa).

A signal peptide spans Met1–Ala20. The disordered stretch occupies residues Gly936–Gly972. Residues Ala948 to Pro965 show a composition bias toward pro residues.

The protein belongs to the glycosyl hydrolase 50 family.

The enzyme catalyses Hydrolysis of (1-&gt;4)-beta-D-galactosidic linkages in agarose, giving the tetramer as the predominant product.. Functionally, hydrolyzes agarose and also neoagarotetraose to yield neoagarobiose. This is Beta-agarase A (agaA) from Vibrio sp. (strain JT0107).